A 288-amino-acid chain; its full sequence is Energy-coupling factor transporter ATP-binding protein EcfA2 (288 aa).

Residues 3–246 enclose the ABC transporter domain; it reads IKLEQLGYCY…PDELVDLGLS (244 aa). ATP is bound at residue 40–47; that stretch reads GHTGSGKS.

It belongs to the ABC transporter superfamily. Energy-coupling factor EcfA family. In terms of assembly, forms a stable energy-coupling factor (ECF) transporter complex composed of 2 membrane-embedded substrate-binding proteins (S component), 2 ATP-binding proteins (A component) and 2 transmembrane proteins (T component).

It is found in the cell membrane. Its function is as follows. ATP-binding (A) component of a common energy-coupling factor (ECF) ABC-transporter complex. Unlike classic ABC transporters this ECF transporter provides the energy necessary to transport a number of different substrates. This is Energy-coupling factor transporter ATP-binding protein EcfA2 from Listeria monocytogenes serovar 1/2a (strain ATCC BAA-679 / EGD-e).